The following is a 421-amino-acid chain: Protein OS-9 homolog (421 aa).

A signal peptide spans 1 to 26 (MWRWSTGVRTMLGYAMCFLALGSALT). One can recognise an MRH domain in the interval 99-220 (EEATVGKKLE…LVSIPSLCEL (122 aa)). A mannooligosaccharide derivative is bound at residue W115. N125 is a glycosylation site (N-linked (GlcNAc...) asparagine). Intrachain disulfides connect C173-C206 and C188-C218. Positions 180, 202, and 208 each coordinate a mannooligosaccharide derivative. N-linked (GlcNAc...) asparagine glycans are attached at residues N271 and N332. Residues 375–394 (GNSEDYEQQAPEQLDEEEAE) are compositionally biased toward acidic residues. The segment at 375-403 (GNSEDYEQQAPEQLDEEEAELTSQSDDPA) is disordered.

The protein belongs to the OS-9 family. In terms of assembly, interacts with missfolded ER lumenal proteins.

The protein resides in the endoplasmic reticulum membrane. Functionally, lectin involved in the quality control of the secretory pathway. As a member of the endoplasmic reticulum-associated degradation lumenal (ERAD-L) surveillance system, targets misfolded endoplasmic reticulum lumenal glycoproteins for degradation. The protein is Protein OS-9 homolog (YOS9) of Eremothecium gossypii (strain ATCC 10895 / CBS 109.51 / FGSC 9923 / NRRL Y-1056) (Yeast).